Here is a 348-residue protein sequence, read N- to C-terminus: Spore wall and anchoring disk complex protein EnP1 (348 aa).

The signal sequence occupies residues 1–16 (MKLLGLLISAFGAINA). N47, N139, and N140 each carry an N-linked (GlcNAc...) asparagine glycan. Positions 193-198 (PRHGRS) match the HBM1 motif. Positions 248–256 (IRKGKDKKC) match the HBM2 motif. Positions 322 to 327 (LKKIRG) match the HBM3 motif.

The protein localises to the spore wall. It is found in the spore. It localises to the perispore. Spore wall protein involved in the adhesion to host cells surface glycoaminoglycans (GAGs). Microsporidian spore adherence is an integral part of activation and host cell infection. The chain is Spore wall and anchoring disk complex protein EnP1 (EnP1) from Encephalitozoon intestinalis (Microsporidian parasite).